We begin with the raw amino-acid sequence, 447 residues long: Chordin-like protein 1 (447 aa).

The signal sequence occupies residues 1–22 (MDGMKYIISLFFIFVFLEGSKT). VWFC domains lie at 30–95 (TYCV…PRCP) and 108–174 (KSCE…RVCR). Asn113 is a glycosylation site (N-linked (GlcNAc...) asparagine). A Cell attachment site motif is present at residues 174-176 (RGD). Residues 200–224 (SYLRSPYDPPPNRQAGGLPRFPGSR) are disordered. The VWFC 3 domain maps to 253 to 318 (QVCVSNGKTY…IDGKCCKVCP (66 aa)). Asn286 carries N-linked (GlcNAc...) asparagine glycosylation.

Post-translationally, may be glycosylated. As to expression, expressed in heart, brain, lung, liver, kidney and testis.

Its subcellular location is the secreted. In terms of biological role, seems to antagonize the function of BMP4 by binding to it and preventing its interaction with receptors. Alters the fate commitment of neural stem cells from gliogenesis to neurogenesis. Contributes to neuronal differentiation of neural stem cells in the brain by preventing the adoption of a glial fate. May play a crucial role in dorsoventral axis formation. Antagonizes the function of BMP7 and may thus play an important role in the embryonic bone formation. Shows no inhibitory effect on the inducing activity of BMP2. Plays a role during anterior segment eye development. This Mus musculus (Mouse) protein is Chordin-like protein 1 (Chrdl1).